The primary structure comprises 333 residues: Biotin synthase (333 aa).

One can recognise a Radical SAM core domain in the interval 51–281 (HFGNQVSLCG…DVHITICGGR (231 aa)). The [4Fe-4S] cluster site is built by cysteine 69, cysteine 73, and cysteine 76. Position 206 (cysteine 206) interacts with [2Fe-2S] cluster.

It belongs to the radical SAM superfamily. Biotin synthase family. Homodimer. It depends on [4Fe-4S] cluster as a cofactor. [2Fe-2S] cluster serves as cofactor.

The enzyme catalyses (4R,5S)-dethiobiotin + (sulfur carrier)-SH + 2 reduced [2Fe-2S]-[ferredoxin] + 2 S-adenosyl-L-methionine = (sulfur carrier)-H + biotin + 2 5'-deoxyadenosine + 2 L-methionine + 2 oxidized [2Fe-2S]-[ferredoxin]. It functions in the pathway cofactor biosynthesis; biotin biosynthesis; biotin from 7,8-diaminononanoate: step 2/2. In terms of biological role, catalyzes the conversion of dethiobiotin (DTB) to biotin by the insertion of a sulfur atom into dethiobiotin via a radical-based mechanism. This is Biotin synthase from Trichlorobacter lovleyi (strain ATCC BAA-1151 / DSM 17278 / SZ) (Geobacter lovleyi).